The primary structure comprises 475 residues: Doublecortin domain-containing protein 2 (475 aa).

Doublecortin domains are found at residues 17-100 and 139-221; these read KSVL…LNYL and CTIF…LPYS. The tract at residues 234–475 is disordered; the sequence is YGQKASSLPP…ESNKASSAVA (242 aa). A compositionally biased stretch (polar residues) spans 252–272; that stretch reads GSGNYRQSKSTIGSSDNSSPQ. Phosphoserine is present on Ser270. The segment covering 353-365 has biased composition (basic and acidic residues); the sequence is EKTSKDANQKDDF. Acidic residues predominate over residues 407–419; it reads TDEENGEELDQVT. The span at 455-475 shows a compositional bias: polar residues; that stretch reads TVTSPQENEGNESNKASSAVA.

Interacts with DVL1, DVL2 and DVL3. As to expression, expressed in hair cells of the inner ear.

It is found in the cell projection. It localises to the cilium. Its subcellular location is the cytoplasm. The protein localises to the cytoskeleton. The protein resides in the cilium axoneme. It is found in the kinocilium. Its function is as follows. Protein that plays a role in the inhibition of canonical Wnt signaling pathway. May be involved in neuronal migration during development of the cerebral neocortex. Involved in the control of ciliogenesis and ciliary length. The protein is Doublecortin domain-containing protein 2 (Dcdc2) of Rattus norvegicus (Rat).